The following is a 337-amino-acid chain: GTP 3',8-cyclase (337 aa).

The Radical SAM core domain occupies 17-243; the sequence is PFQRQYYYLR…HKSHTDGPAK (227 aa). R26 is a binding site for GTP. [4Fe-4S] cluster-binding residues include C33 and C37. Residue Y39 coordinates S-adenosyl-L-methionine. Residue C40 coordinates [4Fe-4S] cluster. Position 76 (R76) interacts with GTP. Residue G80 participates in S-adenosyl-L-methionine binding. A GTP-binding site is contributed by T107. S131 contacts S-adenosyl-L-methionine. Residue K168 coordinates GTP. Residue M202 participates in S-adenosyl-L-methionine binding. Residues C265 and C268 each coordinate [4Fe-4S] cluster. 270 to 272 serves as a coordination point for GTP; sequence RLR. Position 282 (C282) interacts with [4Fe-4S] cluster.

It belongs to the radical SAM superfamily. MoaA family. In terms of assembly, monomer and homodimer. [4Fe-4S] cluster is required as a cofactor.

The enzyme catalyses GTP + AH2 + S-adenosyl-L-methionine = (8S)-3',8-cyclo-7,8-dihydroguanosine 5'-triphosphate + 5'-deoxyadenosine + L-methionine + A + H(+). Its pathway is cofactor biosynthesis; molybdopterin biosynthesis. Functionally, catalyzes the cyclization of GTP to (8S)-3',8-cyclo-7,8-dihydroguanosine 5'-triphosphate. The chain is GTP 3',8-cyclase from Haemophilus influenzae (strain PittEE).